A 440-amino-acid chain; its full sequence is Gap junction alpha-8 protein (440 aa).

The stretch at 2–12 (GDWSFLGNILE) is an intramembrane region. The Cytoplasmic segment spans residues 13 to 21 (EVNEHSTVI). A helical transmembrane segment spans residues 22–42 (GRVWLTVLFIFRILILGTAAE). At 43 to 71 (FVWGDEQSDFVCNTQQPGCENVCYDEAFP) the chain is on the extracellular side. Cystine bridges form between C54-C201, C61-C195, and C65-C190. Residues 72–92 (ISHIRLWVLQIIFVSTPSLVY) form a helical membrane-spanning segment. Topologically, residues 93–161 (VGHAVHHVRM…GTLLRTYVCH (69 aa)) are cytoplasmic. The tract at residues 108–144 (EREAEELSQQSPGNGGERAPLAADQGSVKKSSSSSKG) is disordered. Residues 162–182 (IIFKTLFEVGFIVGHYFLYGF) form a helical membrane-spanning segment. Topologically, residues 183–210 (RILPLYRCSRWPCPNVVDCFVSRPTEKT) are extracellular. A helical membrane pass occupies residues 211–231 (IFILFMLSVASVSLFLNILEM). Over 232–440 (SHLGLKKIRS…SRARSDDLTV (209 aa)) the chain is Cytoplasmic. Residues 334-440 (GAQEGVEEEQ…SRARSDDLTV (107 aa)) are disordered. 2 stretches are compositionally biased toward basic and acidic residues: residues 353–365 (VGDK…RVST) and 375–405 (EEEK…ELTP). The span at 423–432 (LSRLSKASSR) shows a compositional bias: low complexity.

Belongs to the connexin family. Alpha-type (group II) subfamily. In terms of assembly, a hemichannel or connexon is composed of a hexamer of connexins. A functional gap junction is formed by the apposition of two hemichannels. Forms heteromeric channels with GJA3. As to expression, detected in eye lens (at protein level). Eye lens.

Its subcellular location is the cell membrane. It is found in the cell junction. It localises to the gap junction. Its function is as follows. Structural component of eye lens gap junctions. Gap junctions are dodecameric channels that connect the cytoplasm of adjoining cells. They are formed by the docking of two hexameric hemichannels, one from each cell membrane. Small molecules and ions diffuse from one cell to a neighboring cell via the central pore. In Ovis aries (Sheep), this protein is Gap junction alpha-8 protein (GJA8).